The chain runs to 181 residues: Adenine phosphoribosyltransferase (181 aa).

It belongs to the purine/pyrimidine phosphoribosyltransferase family. Homodimer.

The protein resides in the cytoplasm. It catalyses the reaction AMP + diphosphate = 5-phospho-alpha-D-ribose 1-diphosphate + adenine. It participates in purine metabolism; AMP biosynthesis via salvage pathway; AMP from adenine: step 1/1. Catalyzes a salvage reaction resulting in the formation of AMP, that is energically less costly than de novo synthesis. This is Adenine phosphoribosyltransferase from Vibrio atlanticus (strain LGP32) (Vibrio splendidus (strain Mel32)).